Reading from the N-terminus, the 237-residue chain is MSRETTTKDLDSLRALAERGAAELQDASAEELLRWTDENFGGNYVVASNMQDAVLVDLAAQVRPGVDVLFLDTGYHFAETIGTRDAVESVYDIHVVNVAPEQTVAQQDELVGKDLFASDPGECCRLRKVVPLRKSLAGYAAWVTGLRRVDAPTRANAPLISFDEAFGLVKINAIAAWTDEDMQKYIDEHGTLVNPLVDEGYPSIGCAPCTAKPVLGGDARSGRWQGLAKTECGLHAS.

[4Fe-4S] cluster is bound by residues cysteine 123, cysteine 124, cysteine 206, and cysteine 209. Cysteine 232 serves as the catalytic Nucleophile; cysteine thiosulfonate intermediate.

Belongs to the PAPS reductase family. CysH subfamily. [4Fe-4S] cluster is required as a cofactor.

It localises to the cytoplasm. It catalyses the reaction [thioredoxin]-disulfide + sulfite + AMP + 2 H(+) = adenosine 5'-phosphosulfate + [thioredoxin]-dithiol. It participates in sulfur metabolism; hydrogen sulfide biosynthesis; sulfite from sulfate. Catalyzes the formation of sulfite from adenosine 5'-phosphosulfate (APS) using thioredoxin as an electron donor. This is Adenosine 5'-phosphosulfate reductase from Mycobacteroides abscessus (strain ATCC 19977 / DSM 44196 / CCUG 20993 / CIP 104536 / JCM 13569 / NCTC 13031 / TMC 1543 / L948) (Mycobacterium abscessus).